Consider the following 264-residue polypeptide: Virulence plasmid protein pGP3-D (264 aa).

The protein is Virulence plasmid protein pGP3-D of Chlamydia muridarum (strain MoPn / Nigg).